A 131-amino-acid chain; its full sequence is Small ribosomal subunit protein uS8 (131 aa).

Belongs to the universal ribosomal protein uS8 family. Part of the 30S ribosomal subunit. Contacts proteins S5 and S12.

One of the primary rRNA binding proteins, it binds directly to 16S rRNA central domain where it helps coordinate assembly of the platform of the 30S subunit. The chain is Small ribosomal subunit protein uS8 from Alkalilimnicola ehrlichii (strain ATCC BAA-1101 / DSM 17681 / MLHE-1).